The sequence spans 200 residues: Probable nicotinate-nucleotide adenylyltransferase (200 aa).

The protein belongs to the NadD family.

It carries out the reaction nicotinate beta-D-ribonucleotide + ATP + H(+) = deamido-NAD(+) + diphosphate. It functions in the pathway cofactor biosynthesis; NAD(+) biosynthesis; deamido-NAD(+) from nicotinate D-ribonucleotide: step 1/1. Catalyzes the reversible adenylation of nicotinate mononucleotide (NaMN) to nicotinic acid adenine dinucleotide (NaAD). In Clavibacter sepedonicus (Clavibacter michiganensis subsp. sepedonicus), this protein is Probable nicotinate-nucleotide adenylyltransferase.